A 134-amino-acid polypeptide reads, in one-letter code: Retinol-binding protein 2 (134 aa).

Lys41 and Gln109 together coordinate all-trans-retinol.

Belongs to the calycin superfamily. Fatty-acid binding protein (FABP) family.

It is found in the cytoplasm. Its function is as follows. Intracellular transport of retinol. The protein is Retinol-binding protein 2 (Rbp2) of Rattus norvegicus (Rat).